The primary structure comprises 438 residues: Anaerobic glycerol-3-phosphate dehydrogenase subunit B (438 aa).

Belongs to the anaerobic G-3-P dehydrogenase subunit B family. In terms of assembly, composed of a catalytic GlpA/B dimer and of membrane bound GlpC. Requires FMN as cofactor.

The catalysed reaction is a quinone + sn-glycerol 3-phosphate = dihydroxyacetone phosphate + a quinol. It functions in the pathway polyol metabolism; glycerol degradation via glycerol kinase pathway; glycerone phosphate from sn-glycerol 3-phosphate (anaerobic route): step 1/1. Conversion of glycerol 3-phosphate to dihydroxyacetone. Uses fumarate or nitrate as electron acceptor. The polypeptide is Anaerobic glycerol-3-phosphate dehydrogenase subunit B (Vibrio vulnificus (strain YJ016)).